Consider the following 1373-residue polypeptide: Inactive tyrosine-protein kinase PRAG1 (1373 aa).

Disordered stretches follow at residues 31–50 (AGHP…LPAR) and 197–235 (TSSC…DSEG). The residue at position 238 (tyrosine 238) is a Phosphotyrosine. Composition is skewed to basic and acidic residues over residues 250–263 (DAVH…RRGG) and 272–284 (QGPR…EEKQ). The interval 250–338 (DAVHSTEGSG…SGASSPFAPH (89 aa)) is disordered. Residues 317-333 (SSSDGLSCGSSRSGASS) show a composition bias toward low complexity. Phosphotyrosine is present on residues tyrosine 343 and tyrosine 391. 2 disordered regions span residues 376–448 (QPAS…NPAP) and 468–794 (IYLS…LPQK). Residues 419 to 438 (SQGQVWTGDTWIQKTPPSWS) show a composition bias toward polar residues. Over residues 506–522 (RESHPHNVTENTAKEKP) the composition is skewed to basic and acidic residues. Residues 526–538 (PKLSKSSPGGSPV) are compositionally biased toward low complexity. 2 stretches are compositionally biased toward polar residues: residues 568–578 (NLTSSCHTNGV) and 655–670 (TSGQ…SKSA). Phosphoserine occurs at positions 671 and 720. Composition is skewed to polar residues over residues 711 to 721 (VSQSSAESLSP) and 729 to 740 (SFTTGSTDSLAS). Phosphoserine is present on residues serine 757 and serine 802. The disordered stretch occupies residues 804–823 (PDGFFWTQGSPKPRTASPKL). Positions 911 to 954 (STQLQLHSLLSSISSKEGTYAKLGGLYTQSLARLVTKCEDLFMG) are required for homodimerization. The region spanning 945-1296 (VTKCEDLFMG…EAKRVLQCLL (352 aa)) is the Protein kinase domain. The span at 1041-1050 (LASPDTSSKD) shows a compositional bias: polar residues. Disordered regions lie at residues 1041–1062 (LASP…PPAQ) and 1138–1171 (QSSP…QGGP). Low complexity predominate over residues 1139-1167 (SSPGPSATPTVPTTTSRCPSAAPAATTAC). Residues 1298–1373 (GPRRELVEQP…LQSLKLLQLL (76 aa)) are required for homodimerization.

This sequence belongs to the protein kinase superfamily. Homodimer. Dimerization leads to the catalytic activation of CSK. Interacts (via C-terminus) with RND2. Interacts with CSK (via SH2 domain) in a Tyr-391 phosphorylation-dependent manner; this interaction potentiates kinase activity of CSK. Interacts with NOTCH1 intracellular domain (N1ICD). Forms a complex with PRAG1, N1ICD and MAML1, in a MAML1-dependent manner. Phosphorylated by CSK on Tyr-238, Tyr-343, and Tyr-391; Tyr-391 is a primary site of phosphorylation.

Its subcellular location is the cytoplasm. The protein localises to the nucleus. The protein resides in the cell junction. It is found in the focal adhesion. Catalytically inactive protein kinase that acts as a scaffold protein. Functions as an effector of the small GTPase RND2, which stimulates RhoA activity and inhibits NGF-induced neurite outgrowth. Promotes Src family kinase (SFK) signaling by regulating the subcellular localization of CSK, a negative regulator of these kinases, leading to the regulation of cell morphology and motility by a CSK-dependent mechanism. Acts as a critical coactivator of Notch signaling. The polypeptide is Inactive tyrosine-protein kinase PRAG1 (Mus musculus (Mouse)).